A 323-amino-acid chain; its full sequence is 4-hydroxythreonine-4-phosphate dehydrogenase (323 aa).

Thr-133 serves as a coordination point for substrate. Positions 161, 206, and 261 each coordinate a divalent metal cation. Lys-269, Asn-278, and Arg-287 together coordinate substrate.

This sequence belongs to the PdxA family. In terms of assembly, homodimer. The cofactor is Zn(2+). It depends on Mg(2+) as a cofactor. Requires Co(2+) as cofactor.

Its subcellular location is the cytoplasm. The catalysed reaction is 4-(phosphooxy)-L-threonine + NAD(+) = 3-amino-2-oxopropyl phosphate + CO2 + NADH. It participates in cofactor biosynthesis; pyridoxine 5'-phosphate biosynthesis; pyridoxine 5'-phosphate from D-erythrose 4-phosphate: step 4/5. In terms of biological role, catalyzes the NAD(P)-dependent oxidation of 4-(phosphooxy)-L-threonine (HTP) into 2-amino-3-oxo-4-(phosphooxy)butyric acid which spontaneously decarboxylates to form 3-amino-2-oxopropyl phosphate (AHAP). The polypeptide is 4-hydroxythreonine-4-phosphate dehydrogenase (Xanthomonas axonopodis pv. citri (strain 306)).